Reading from the N-terminus, the 209-residue chain is Large ribosomal subunit protein uL3 (209 aa).

Residues 122–152 (AIKRHGQSRGPMSHGSRYHRRPGSMGPVDPN) are disordered.

Belongs to the universal ribosomal protein uL3 family. As to quaternary structure, part of the 50S ribosomal subunit. Forms a cluster with proteins L14 and L19. Interacts with RNA helicase CshA.

Functionally, one of the primary rRNA binding proteins, it binds directly near the 3'-end of the 23S rRNA, where it nucleates assembly of the 50S subunit. Strongly stimulates 23S rRNA precursor processing by mini-ribonuclease 3 (MrnC); 20-30% DMSO can replace L3, suggesting the protein may alter rRNA conformation. The sequence is that of Large ribosomal subunit protein uL3 from Bacillus subtilis (strain 168).